Consider the following 76-residue polypeptide: Large ribosomal subunit protein eL38 (76 aa).

This sequence belongs to the eukaryotic ribosomal protein eL38 family.

In Lysiphlebus testaceipes (Greenbugs aphid parastoid), this protein is Large ribosomal subunit protein eL38 (RpL38).